The following is an 82-amino-acid chain: Small ribosomal subunit protein bS18 (82 aa).

It belongs to the bacterial ribosomal protein bS18 family. As to quaternary structure, part of the 30S ribosomal subunit. Forms a tight heterodimer with protein bS6.

Binds as a heterodimer with protein bS6 to the central domain of the 16S rRNA, where it helps stabilize the platform of the 30S subunit. This chain is Small ribosomal subunit protein bS18, found in Bifidobacterium adolescentis (strain ATCC 15703 / DSM 20083 / NCTC 11814 / E194a).